The sequence spans 339 residues: Anthranilate phosphoribosyltransferase (339 aa).

Residues Gly-82, 85–86 (GD), Thr-90, 92–95 (NIST), 110–118 (KHGNRSASG), and Ser-122 each bind 5-phospho-alpha-D-ribose 1-diphosphate. Position 82 (Gly-82) interacts with anthranilate. Mg(2+) is bound at residue Ser-94. Asn-113 contributes to the anthranilate binding site. Arg-168 contacts anthranilate. Mg(2+) is bound by residues Asp-226 and Glu-227.

It belongs to the anthranilate phosphoribosyltransferase family. As to quaternary structure, homodimer. Mg(2+) is required as a cofactor.

It carries out the reaction N-(5-phospho-beta-D-ribosyl)anthranilate + diphosphate = 5-phospho-alpha-D-ribose 1-diphosphate + anthranilate. Its pathway is amino-acid biosynthesis; L-tryptophan biosynthesis; L-tryptophan from chorismate: step 2/5. Catalyzes the transfer of the phosphoribosyl group of 5-phosphorylribose-1-pyrophosphate (PRPP) to anthranilate to yield N-(5'-phosphoribosyl)-anthranilate (PRA). This chain is Anthranilate phosphoribosyltransferase, found in Methanosphaerula palustris (strain ATCC BAA-1556 / DSM 19958 / E1-9c).